A 218-amino-acid chain; its full sequence is Superoxide dismutase [Mn], mitochondrial (218 aa).

Mn(2+)-binding residues include histidine 27, histidine 84, aspartate 174, and histidine 178.

This sequence belongs to the iron/manganese superoxide dismutase family. As to quaternary structure, homotetramer. Mn(2+) serves as cofactor.

The protein resides in the mitochondrion matrix. It catalyses the reaction 2 superoxide + 2 H(+) = H2O2 + O2. Functionally, destroys superoxide anion radicals which are normally produced within the cells and which are toxic to biological systems. This is Superoxide dismutase [Mn], mitochondrial (SODA) from Chlamydomonas reinhardtii (Chlamydomonas smithii).